Here is a 625-residue protein sequence, read N- to C-terminus: DNA mismatch repair protein MutL (625 aa).

It belongs to the DNA mismatch repair MutL/HexB family.

Its function is as follows. This protein is involved in the repair of mismatches in DNA. It is required for dam-dependent methyl-directed DNA mismatch repair. May act as a 'molecular matchmaker', a protein that promotes the formation of a stable complex between two or more DNA-binding proteins in an ATP-dependent manner without itself being part of a final effector complex. In Bacteroides fragilis (strain YCH46), this protein is DNA mismatch repair protein MutL.